The primary structure comprises 218 residues: 1-Cys peroxiredoxin PER1 (218 aa).

In terms of domain architecture, Thioredoxin spans 4–164; the sequence is LTIGDTVPNL…VVRAVDSLLT (161 aa). C46 serves as the catalytic Cysteine sulfenic acid (-SOH) intermediate. Positions 194–217 match the Bipartite nuclear localization signal motif; the sequence is KKMFPQGFETADLPSKKGYLRFTK.

This sequence belongs to the peroxiredoxin family. Prx6 subfamily. Embryo and aleurone cells.

It is found in the nucleus. The protein localises to the cytoplasm. The enzyme catalyses a hydroperoxide + [thioredoxin]-dithiol = an alcohol + [thioredoxin]-disulfide + H2O. In terms of biological role, thiol-specific peroxidase that catalyzes the reduction of hydrogen peroxide and organic hydroperoxides to water and alcohols, respectively. Seems to contribute to the inhibition of germination during stress. The protein is 1-Cys peroxiredoxin PER1 (PER1) of Hordeum vulgare (Barley).